Here is a 155-residue protein sequence, read N- to C-terminus: MSKKGGYKGVQVDHRYNDESVARFINAVMLDGKKDVATKIVYDAFAIIGEKMVDENPLEVYRRAMSNIAPVVEVRSKRVGGATYQIPMEVKPSRRGALAFRWLKQYATKRGGRSMAEKLAAELMDAASEQGASVKKRDEVHRMADANKAFAHFRF.

The protein belongs to the universal ribosomal protein uS7 family. In terms of assembly, part of the 30S ribosomal subunit. Contacts proteins S9 and S11.

Functionally, one of the primary rRNA binding proteins, it binds directly to 16S rRNA where it nucleates assembly of the head domain of the 30S subunit. Is located at the subunit interface close to the decoding center, probably blocks exit of the E-site tRNA. The polypeptide is Small ribosomal subunit protein uS7 (Chlorobium luteolum (strain DSM 273 / BCRC 81028 / 2530) (Pelodictyon luteolum)).